The sequence spans 216 residues: Adenylate kinase (216 aa).

ATP is bound at residue 10-15; the sequence is GAGKGT. The NMP stretch occupies residues 30 to 59; sequence STGDIFRAHMSQGTPLGKLAKEYVDAGKYV. Residues Thr-31, Arg-36, 57–59, 85–88, and Gln-92 contribute to the AMP site; these read KYV and GYPR. The interval 126–163 is LID; sequence GRRVCRSCGATYHVRFNPPREAGRCDRCGGELYQRSDD. Residue Arg-127 coordinates ATP. Zn(2+) is bound by residues Cys-130 and Cys-133. 136 to 137 provides a ligand contact to ATP; it reads TY. Residues Cys-150 and Cys-153 each contribute to the Zn(2+) site. AMP contacts are provided by Arg-160 and Arg-171. Gln-199 lines the ATP pocket.

It belongs to the adenylate kinase family. As to quaternary structure, monomer.

The protein localises to the cytoplasm. The catalysed reaction is AMP + ATP = 2 ADP. The protein operates within purine metabolism; AMP biosynthesis via salvage pathway; AMP from ADP: step 1/1. Catalyzes the reversible transfer of the terminal phosphate group between ATP and AMP. Plays an important role in cellular energy homeostasis and in adenine nucleotide metabolism. The chain is Adenylate kinase from Symbiobacterium thermophilum (strain DSM 24528 / JCM 14929 / IAM 14863 / T).